The sequence spans 263 residues: Reductase pytE (263 aa).

Belongs to the avfA family.

Its pathway is secondary metabolite biosynthesis. Functionally, reductase; part of the gene cluster that mediates the biosynthesis of pyranterreones, a family of antioxidative compounds. The first step of pyranonigrins biosynthesis is performed by the hybrid PKS-NRPS synthetase pytA that condenses 4 malonyl-CoA units ato the acetyl starter unit by the modular PKS of pytA. The acyl chain is then connected to an L-serine through the amide bond by the modular NRPS of pytA. A tetramic acid is formed and released from the PKS-NRPS pytA to give pyranterreone 5 with the help of the thioesterase pytI. Pyranterreone 5 could be methylated by pytC to afford pyranterreone 6. Both pyranterreones 5 and 6 are subsequently oxidized by the FAD-linked oxidoreductase pytB and the cytochrome P450 monooxygenase pytD to form the fused gamma-pyrone core, resulting in pyranterreones 7 and 11, respectively. The hydroxy group at C-8 of pyranterreones 7 and 11 are dehydrated by the aspartyl protease pytH to form a delta-7 double bond to give pyranterreones 3 and 1, 2 accordingly. The exo-methylene of pyranterreone 3 could be reduced into a pendant methyl by reductase pytE to provide pyranterreone 4, also known as cordylactam. Pyranterreone 4 can be reconverted to pyranterreone 3 through pytB-catalyzed dehydrogenation or further oxidized to pyranterreones 9 and 10. The sequence is that of Reductase pytE from Aspergillus terreus.